Consider the following 585-residue polypeptide: Probable glucomannan 4-beta-mannosyltransferase 7 (585 aa).

Residues 87 to 107 (VIAPTLQVAVWVCMVMSVMLV) form a helical membrane-spanning segment. The active site involves Asp188. Positions 247 and 249 each coordinate substrate. Asp341 is an active-site residue. The next 4 helical transmembrane spans lie at 420 to 440 (VVAP…SVMI), 443 to 463 (LFIP…ITTI), 534 to 554 (LPEI…LIFH), and 563 to 583 (LYLQ…NFAC).

This sequence belongs to the glycosyltransferase 2 family. Plant cellulose synthase-like A subfamily.

It is found in the golgi apparatus membrane. It carries out the reaction GDP-mannose + (glucomannan)n = GDP + (glucomannan)n+1.. Probable mannan synthase which consists of a 4-beta-mannosyltransferase activity on mannan using GDP-mannose. The beta-1,4-mannan product is the backbone for galactomannan synthesis by galactomannan galactosyltransferase. Galactomannan is a noncellulosic polysaccharides of plant cell wall. This chain is Probable glucomannan 4-beta-mannosyltransferase 7, found in Oryza sativa subsp. japonica (Rice).